The primary structure comprises 319 residues: Cytochrome c biogenesis protein CcsA (319 aa).

The next 7 helical transmembrane spans lie at 9 to 29, 44 to 64, 68 to 88, 143 to 163, 223 to 243, 257 to 271, and 286 to 306; these read ILTHISFSTISIVITIHLITL, GMIVTFFSITGFLVSRWASSG, LSNLYESLIFLSWALYILHTI, MLLSYATLLCGSLLSAAILII, VISLGFTLLTIGILCGAVWAN, TWAFITWTIFAIYLH, and VASIGFLIIWICYFGINLLGI.

This sequence belongs to the CcmF/CycK/Ccl1/NrfE/CcsA family. May interact with Ccs1.

The protein localises to the plastid. The protein resides in the chloroplast thylakoid membrane. Its function is as follows. Required during biogenesis of c-type cytochromes (cytochrome c6 and cytochrome f) at the step of heme attachment. The protein is Cytochrome c biogenesis protein CcsA of Agrostis stolonifera (Creeping bentgrass).